The following is a 481-amino-acid chain: p-aminobenzoyl-glutamate hydrolase subunit B (481 aa).

Forms a heterodimer with AbgA. Requires Mn(2+) as cofactor.

In terms of biological role, component of the p-aminobenzoyl-glutamate hydrolase multicomponent enzyme system which catalyzes the cleavage of p-aminobenzoyl-glutamate (PABA-GLU) to form p-aminobenzoate (PABA) and glutamate. AbgAB does not degrade dipeptides and the physiological role of abgABT should be clarified. The chain is p-aminobenzoyl-glutamate hydrolase subunit B (abgB) from Escherichia coli (strain K12).